We begin with the raw amino-acid sequence, 165 residues long: Phosphopantetheine adenylyltransferase (165 aa).

Residue threonine 10 coordinates substrate. ATP contacts are provided by residues threonine 10–phenylalanine 11 and histidine 18. Residues lysine 42, leucine 75, and arginine 89 each coordinate substrate. Residues glycine 90–arginine 92, glutamate 100, and tyrosine 125–threonine 131 each bind ATP.

It belongs to the bacterial CoaD family. As to quaternary structure, homohexamer. Requires Mg(2+) as cofactor.

Its subcellular location is the cytoplasm. It carries out the reaction (R)-4'-phosphopantetheine + ATP + H(+) = 3'-dephospho-CoA + diphosphate. It participates in cofactor biosynthesis; coenzyme A biosynthesis; CoA from (R)-pantothenate: step 4/5. Its function is as follows. Reversibly transfers an adenylyl group from ATP to 4'-phosphopantetheine, yielding dephospho-CoA (dPCoA) and pyrophosphate. The sequence is that of Phosphopantetheine adenylyltransferase from Chlorobaculum tepidum (strain ATCC 49652 / DSM 12025 / NBRC 103806 / TLS) (Chlorobium tepidum).